Reading from the N-terminus, the 633-residue chain is Probable potassium transport system protein Kup 2 (633 aa).

12 helical membrane passes run 18-38, 61-81, 107-127, 143-163, 173-193, 211-231, 255-275, 287-307, 345-365, 371-391, 402-422, and 427-447; these read FLAL…TSPL, LVSL…VLFL, PVLM…DAMI, VAPA…LLLF, VSVF…AAGV, AIGF…AIFL, WFAV…ALVL, LMFP…ATII, IYLP…MLMF, LAPA…ILAF, ALTA…FLGA, and VHHG…MMWT.

Belongs to the HAK/KUP transporter (TC 2.A.72) family.

It localises to the cell inner membrane. It carries out the reaction K(+)(in) + H(+)(in) = K(+)(out) + H(+)(out). Functionally, transport of potassium into the cell. Likely operates as a K(+):H(+) symporter. The sequence is that of Probable potassium transport system protein Kup 2 from Rhizobium meliloti (strain 1021) (Ensifer meliloti).